The following is a 156-amino-acid chain: MGRFIFVRVGLLVVFLSLSGTGADFDCPPDWSAYDQHCYKAFDEPKRSGDAEKFCTQQANGGHLVSIESVEEAEFVAQLISENIKTSADYVWIGLWNQRKAPYCVSKWTDGSSVIYKNVIERFIKNCFGLEKETNYRTWFNLSCGDDYPFVCKSPA.

The N-terminal stretch at 1–23 (MGRFIFVRVGLLVVFLSLSGTGA) is a signal peptide. 3 disulfides stabilise this stretch: C27–C38, C55–C152, and C127–C144. The C-type lectin domain occupies 34–153 (YDQHCYKAFD…CGDDYPFVCK (120 aa)). Residue N141 is glycosylated (N-linked (GlcNAc...) asparagine).

The protein belongs to the snaclec family. In terms of assembly, heterodimer; disulfide-linked. Expressed by the venom gland.

It is found in the secreted. Functionally, interferes with one step of hemostasis (modulation of platelet aggregation, or coagulation cascade, for example). The polypeptide is Snaclec A14 (Macrovipera lebetinus (Levantine viper)).